Consider the following 163-residue polypeptide: NADH-quinone oxidoreductase subunit I (163 aa).

4Fe-4S ferredoxin-type domains follow at residues 55–84 (RRYE…IESE) and 94–123 (TQYD…ETRV). [4Fe-4S] cluster is bound by residues cysteine 64, cysteine 67, cysteine 70, cysteine 74, cysteine 103, cysteine 106, cysteine 109, and cysteine 113.

This sequence belongs to the complex I 23 kDa subunit family. NDH-1 is composed of 14 different subunits. Subunits NuoA, H, J, K, L, M, N constitute the membrane sector of the complex. It depends on [4Fe-4S] cluster as a cofactor.

It is found in the cell inner membrane. It catalyses the reaction a quinone + NADH + 5 H(+)(in) = a quinol + NAD(+) + 4 H(+)(out). NDH-1 shuttles electrons from NADH, via FMN and iron-sulfur (Fe-S) centers, to quinones in the respiratory chain. The immediate electron acceptor for the enzyme in this species is believed to be ubiquinone. Couples the redox reaction to proton translocation (for every two electrons transferred, four hydrogen ions are translocated across the cytoplasmic membrane), and thus conserves the redox energy in a proton gradient. This chain is NADH-quinone oxidoreductase subunit I, found in Hydrogenovibrio crunogenus (strain DSM 25203 / XCL-2) (Thiomicrospira crunogena).